The following is a 902-amino-acid chain: Ribonuclease E (902 aa).

The 81-residue stretch at 39-119 (SNIYKGKITR…GTKGAALTTF (81 aa)) folds into the S1 motif domain. 2 residues coordinate Mg(2+): D303 and D346. C404 and C407 together coordinate Zn(2+). The segment at 404 to 407 (CPRC) is required for zinc-mediated homotetramerization and catalytic activity. A disordered region spans residues 881–902 (GKNSAGVHSATNFSNSPVSKLK). Polar residues predominate over residues 889–902 (SATNFSNSPVSKLK).

Belongs to the RNase E/G family. RNase E subfamily. As to quaternary structure, component of the RNA degradosome, which is a multiprotein complex involved in RNA processing and mRNA degradation. Within the RNA degradosome, RNase E assembles into a homotetramer formed by a dimer of dimers. Zn(2+) serves as cofactor. Requires Mg(2+) as cofactor.

The protein localises to the cytoplasm. It is found in the cell inner membrane. It catalyses the reaction Endonucleolytic cleavage of single-stranded RNA in A- and U-rich regions.. Its function is as follows. Endoribonuclease that plays a central role in RNA processing and decay. Required for the maturation of 5S and 16S rRNAs and the majority of tRNAs. Also involved in the degradation of most mRNAs. This chain is Ribonuclease E, found in Buchnera aphidicola subsp. Acyrthosiphon pisum (strain APS) (Acyrthosiphon pisum symbiotic bacterium).